A 127-amino-acid polypeptide reads, in one-letter code: MVLPKGMRLKGYKSFDYIHKSAKRYKSDSMMLRVTKANERLIKSTIKNSKSNSCRCAISISNKVSKKAVIRNRLRRLLHNHLKKRLFQKDAFSNNWLLLSLSPKCLDKNTENLLEECDKLLIEAGFC.

This sequence belongs to the RnpA family. As to quaternary structure, consists of a catalytic RNA component (M1 or rnpB) and a protein subunit.

It carries out the reaction Endonucleolytic cleavage of RNA, removing 5'-extranucleotides from tRNA precursor.. RNaseP catalyzes the removal of the 5'-leader sequence from pre-tRNA to produce the mature 5'-terminus. It can also cleave other RNA substrates such as 4.5S RNA. The protein component plays an auxiliary but essential role in vivo by binding to the 5'-leader sequence and broadening the substrate specificity of the ribozyme. The protein is Ribonuclease P protein component of Prochlorococcus marinus (strain SARG / CCMP1375 / SS120).